A 382-amino-acid chain; its full sequence is Protein-arginine rhamnosyltransferase (382 aa).

DTDP-beta-L-rhamnose-binding positions include 17-20 (NFGD), tyrosine 187, glutamine 252, and 268-272 (RGEDS). Aspartate 20 functions as the Proton acceptor in the catalytic mechanism. Glutamate 270 is a catalytic residue.

It belongs to the glycosyltransferase 104 family.

It catalyses the reaction dTDP-beta-L-rhamnose + L-arginyl-[protein] = N(omega)-(alpha-L-rhamnosyl)-L-arginyl-[protein] + dTDP + H(+). Its function is as follows. Protein-arginine rhamnosyltransferase that catalyzes the transfer of a single rhamnose to elongation factor P (EF-P) on 'Lys-32', a modification required for EF-P-dependent rescue of polyproline stalled ribosomes. The sequence is that of Protein-arginine rhamnosyltransferase from Neisseria meningitidis.